The primary structure comprises 116 residues: Large ribosomal subunit protein uL22 (116 aa).

This sequence belongs to the universal ribosomal protein uL22 family. In terms of assembly, part of the 50S ribosomal subunit.

This protein binds specifically to 23S rRNA; its binding is stimulated by other ribosomal proteins, e.g. L4, L17, and L20. It is important during the early stages of 50S assembly. It makes multiple contacts with different domains of the 23S rRNA in the assembled 50S subunit and ribosome. In terms of biological role, the globular domain of the protein is located near the polypeptide exit tunnel on the outside of the subunit, while an extended beta-hairpin is found that lines the wall of the exit tunnel in the center of the 70S ribosome. This chain is Large ribosomal subunit protein uL22, found in Sulfurihydrogenibium sp. (strain YO3AOP1).